A 303-amino-acid polypeptide reads, in one-letter code: Taste receptor type 2 member 13 (303 aa).

Over 1–7 (MKSALPS) the chain is Extracellular. The helical transmembrane segment at 8–28 (IFTLVIIAEFIIGNLSNGFIV) threads the bilayer. Over 29–55 (LINCIDWVSKRELSSVDKLLIILAISR) the chain is Cytoplasmic. Residues 56 to 76 (IGLIWEILVSWFLALHYLAIF) traverse the membrane as a helical segment. Residues 77 to 85 (VSGTGLRIM) are Extracellular-facing. The helical transmembrane segment at 86–106 (IFSWIVSNHFNLWLATILSIF) threads the bilayer. The Cytoplasmic portion of the chain corresponds to 107 to 128 (YLLKIASFSSPAFLYLKWRVNK). Residues 129–149 (VILLILLGTLVFLFLNLIQIN) traverse the membrane as a helical segment. Over 150–184 (MHIKDWLDRYERNTTWNFSMSDFETFSVSVKFTMT) the chain is Extracellular. Asparagine 162 and asparagine 166 each carry an N-linked (GlcNAc...) asparagine glycan. The chain crosses the membrane as a helical span at residues 185–205 (MFSLTPFTVAFISFLLLIFSL). The Cytoplasmic segment spans residues 206 to 232 (QKHLQKMQLNYKGHRDPKTKVHTNALK). A helical transmembrane segment spans residues 233-253 (IVISFLLFYASFFLCVLXSWI). Residues 254-261 (SELYQNTV) are Extracellular-facing. Residues 262–282 (IYMLCETIGVFYPSSHSFLLI) form a helical membrane-spanning segment. Residues 283–303 (LGNAKLRQAFLLVAAKVWAKR) are Cytoplasmic-facing.

The protein belongs to the G-protein coupled receptor T2R family.

The protein localises to the membrane. Receptor that may play a role in the perception of bitterness and is gustducin-linked. May play a role in sensing the chemical composition of the gastrointestinal content. The activity of this receptor may stimulate alpha gustducin, mediate PLC-beta-2 activation and lead to the gating of TRPM5. The polypeptide is Taste receptor type 2 member 13 (TAS2R13) (Gorilla gorilla gorilla (Western lowland gorilla)).